The sequence spans 547 residues: Chaperonin GroEL 1 (547 aa).

ATP contacts are provided by residues 30 to 33 (TLGP), Lys51, 87 to 91 (DGTTT), Gly415, and Asp496.

Belongs to the chaperonin (HSP60) family. Forms a cylinder of 14 subunits composed of two heptameric rings stacked back-to-back. Interacts with the co-chaperonin GroES.

The protein localises to the cytoplasm. It catalyses the reaction ATP + H2O + a folded polypeptide = ADP + phosphate + an unfolded polypeptide.. Functionally, together with its co-chaperonin GroES, plays an essential role in assisting protein folding. The GroEL-GroES system forms a nano-cage that allows encapsulation of the non-native substrate proteins and provides a physical environment optimized to promote and accelerate protein folding. This chain is Chaperonin GroEL 1, found in Rhodopseudomonas palustris (strain BisA53).